A 95-amino-acid chain; its full sequence is MVGKNMSKSLTLKNPGRVAYDSGGIKMFWEKKIEHHARHLQNEDIRVRRSALNKLRVGWAEQLEGRNKMLQGPGRCPDRVPEATESLHTKDKKAA.

The disordered stretch occupies residues 68–95 (KMLQGPGRCPDRVPEATESLHTKDKKAA). Over residues 76–95 (CPDRVPEATESLHTKDKKAA) the composition is skewed to basic and acidic residues.

This sequence belongs to the FAM240 family.

This chain is Protein FAM240C (FAM240C), found in Homo sapiens (Human).